A 43-amino-acid chain; its full sequence is Potassium channel toxin gamma-KTx 4.6 (43 aa).

Cystine bridges form between Cys-5–Cys-23, Cys-11–Cys-34, Cys-20–Cys-39, and Cys-24–Cys-41.

This sequence belongs to the ergtoxin family. Gamma-KTx 4 subfamily. In terms of tissue distribution, expressed by the venom gland.

Its subcellular location is the secreted. Functionally, reversibly blocks Kv11/ERG potassium channels. In Centruroides limpidus (Mexican scorpion), this protein is Potassium channel toxin gamma-KTx 4.6.